A 608-amino-acid polypeptide reads, in one-letter code: Serine/arginine repetitive matrix protein 4 (608 aa).

2 disordered regions span residues 34-246 (ASIT…PLPR) and 261-608 (SAAD…STRR). The span at 78 to 100 (GREKACRELDPARAHSASQDRDP) shows a compositional bias: basic and acidic residues. Basic residues-rich tracts occupy residues 107-123 (RGKK…RRRS) and 131-187 (VKKK…HRCP). Residues 188–200 (SRSQSSELRSPSC) are compositionally biased toward low complexity. Basic and acidic residues predominate over residues 201 to 213 (ESRHRGRSPEEGR). Basic residues predominate over residues 214-228 (KSRRTHSRRCSKNHC). Over residues 289 to 299 (TSSPPSTQTSS) the composition is skewed to low complexity. The span at 322 to 339 (CGNTSDSGNSFTTSSPQN) shows a compositional bias: polar residues. Low complexity-rich tracts occupy residues 389–420 (RSSS…SRST) and 428–459 (SRSP…SRYS). A compositionally biased stretch (basic and acidic residues) spans 460–477 (PSRERDLKYGEKEPQPRE). Basic residues predominate over residues 478-494 (RARRRRRSYSPMRKRRR). Basic and acidic residues predominate over residues 495-504 (DSPSHLEARR). Low complexity predominate over residues 518–555 (PSPSSSSSLSSASSWYSSSSSSSSSSSRSPSRSYSRSR). Residues 556–573 (SPSRSHSSRSQTRSRTRT) show a composition bias toward basic residues. Positions 574–608 (SRSSSSRSLSLGSRSRSRNRSLSYSSAESYASTRR) are enriched in low complexity.

It belongs to the nSR100 family. Post-translationally, phosphorylated. Specifically expressed in neuronal cells (at protein level). Expressed in adult nervous system and sensory organ tissues.

It localises to the nucleus. Its function is as follows. Splicing factor specifically required for neural cell differentiation. Acts in conjunction with nPTB/PTBP2 by binding directly to its regulated target transcripts and promotes neural-specific exon inclusion in many genes that function in neural cell differentiation. Required to promote the inclusion of neural-specific exon 10 in nPTB/PTBP2, leading to increased expression of neural-specific nPTB/PTBP2. Also promotes the inclusion of exon 16 in DAAM1 in neuron extracts. Promotes alternative splicing of REST transcripts to produce REST isoform 2 (REST4) with greatly reduced repressive activity, thereby activating expression of REST targets in neural cells. Plays an important role during embryonic development as well as in the proper functioning of the adult nervous system. Regulates alternative splicing events in genes with important neuronal functions. The sequence is that of Serine/arginine repetitive matrix protein 4 (Srrm4) from Mus musculus (Mouse).